A 202-amino-acid polypeptide reads, in one-letter code: Small ribosomal subunit protein uS4 (202 aa).

An S4 RNA-binding domain is found at 91–154 (SMLSSVLYNS…VNLPSVLAAI (64 aa)).

Belongs to the universal ribosomal protein uS4 family. Part of the 30S ribosomal subunit. Contacts protein S5. The interaction surface between S4 and S5 is involved in control of translational fidelity.

Its function is as follows. One of the primary rRNA binding proteins, it binds directly to 16S rRNA where it nucleates assembly of the body of the 30S subunit. Functionally, with S5 and S12 plays an important role in translational accuracy. In Ehrlichia ruminantium (strain Gardel), this protein is Small ribosomal subunit protein uS4.